Here is a 477-residue protein sequence, read N- to C-terminus: tRNA-2-methylthio-N(6)-dimethylallyladenosine synthase (477 aa).

The region spanning 3–120 (KKLYIKTWGC…LPEMINELKG (118 aa)) is the MTTase N-terminal domain. [4Fe-4S] cluster-binding residues include Cys-12, Cys-49, Cys-83, Cys-157, Cys-161, and Cys-164. The 233-residue stretch at 143-375 (RAEGPTAFVS…QQRITQQALR (233 aa)) folds into the Radical SAM core domain. The TRAM domain occupies 378–441 (RHMVGTEQRI…TNSLRGEVVR (64 aa)).

It belongs to the methylthiotransferase family. MiaB subfamily. In terms of assembly, monomer. [4Fe-4S] cluster serves as cofactor.

It is found in the cytoplasm. The catalysed reaction is N(6)-dimethylallyladenosine(37) in tRNA + (sulfur carrier)-SH + AH2 + 2 S-adenosyl-L-methionine = 2-methylsulfanyl-N(6)-dimethylallyladenosine(37) in tRNA + (sulfur carrier)-H + 5'-deoxyadenosine + L-methionine + A + S-adenosyl-L-homocysteine + 2 H(+). In terms of biological role, catalyzes the methylthiolation of N6-(dimethylallyl)adenosine (i(6)A), leading to the formation of 2-methylthio-N6-(dimethylallyl)adenosine (ms(2)i(6)A) at position 37 in tRNAs that read codons beginning with uridine. The sequence is that of tRNA-2-methylthio-N(6)-dimethylallyladenosine synthase from Alteromonas mediterranea (strain DSM 17117 / CIP 110805 / LMG 28347 / Deep ecotype).